The chain runs to 247 residues: MNDQNSNQFIIYDSNNGFVITPKLTDNIISKLIDFIDQSRNSYREYYGVNCFLWKLDLVNNAIISDSAVEFIIDNDIFSQLSHIASYLFNHYYRLKGTFYCRTENIIEYIYMDGLTNLLTHYVLIDTIDSMCNDDSNDNEKLLSESKEKLNVFIKSTKGFTSDSESVEDIEKNNQSNITCKKIYYVNKIYNNPIINIGDSGKYSELKTKVNDIENDLRTLSSNTNLLWKISALMSMIIVGTVCYLRK.

A coiled-coil region spans residues 200-225 (SGKYSELKTKVNDIENDLRTLSSNTN).

This is an uncharacterized protein from Acanthamoeba polyphaga (Amoeba).